A 296-amino-acid polypeptide reads, in one-letter code: Phosphatidylserine decarboxylase proenzyme (296 aa).

Active-site charge relay system; for autoendoproteolytic cleavage activity residues include Asp-113, His-169, and Ser-256. The Schiff-base intermediate with substrate; via pyruvic acid; for decarboxylase activity role is filled by Ser-256. Ser-256 is modified (pyruvic acid (Ser); by autocatalysis).

The protein belongs to the phosphatidylserine decarboxylase family. PSD-B subfamily. Prokaryotic type II sub-subfamily. Heterodimer of a large membrane-associated beta subunit and a small pyruvoyl-containing alpha subunit. The cofactor is pyruvate. In terms of processing, is synthesized initially as an inactive proenzyme. Formation of the active enzyme involves a self-maturation process in which the active site pyruvoyl group is generated from an internal serine residue via an autocatalytic post-translational modification. Two non-identical subunits are generated from the proenzyme in this reaction, and the pyruvate is formed at the N-terminus of the alpha chain, which is derived from the carboxyl end of the proenzyme. The autoendoproteolytic cleavage occurs by a canonical serine protease mechanism, in which the side chain hydroxyl group of the serine supplies its oxygen atom to form the C-terminus of the beta chain, while the remainder of the serine residue undergoes an oxidative deamination to produce ammonia and the pyruvoyl prosthetic group on the alpha chain. During this reaction, the Ser that is part of the protease active site of the proenzyme becomes the pyruvoyl prosthetic group, which constitutes an essential element of the active site of the mature decarboxylase.

The protein resides in the cell membrane. The catalysed reaction is a 1,2-diacyl-sn-glycero-3-phospho-L-serine + H(+) = a 1,2-diacyl-sn-glycero-3-phosphoethanolamine + CO2. It participates in phospholipid metabolism; phosphatidylethanolamine biosynthesis; phosphatidylethanolamine from CDP-diacylglycerol: step 2/2. In terms of biological role, catalyzes the formation of phosphatidylethanolamine (PtdEtn) from phosphatidylserine (PtdSer). The chain is Phosphatidylserine decarboxylase proenzyme from Clostridium kluyveri (strain ATCC 8527 / DSM 555 / NBRC 12016 / NCIMB 10680 / K1).